The following is a 361-amino-acid chain: tRNA/tmRNA (uracil-C(5))-methyltransferase (361 aa).

S-adenosyl-L-methionine-binding residues include Q185, Y213, N218, E234, and D294. The Nucleophile role is filled by C319. The Proton acceptor role is filled by E353.

Belongs to the class I-like SAM-binding methyltransferase superfamily. RNA M5U methyltransferase family. TrmA subfamily.

The catalysed reaction is uridine(54) in tRNA + S-adenosyl-L-methionine = 5-methyluridine(54) in tRNA + S-adenosyl-L-homocysteine + H(+). It carries out the reaction uridine(341) in tmRNA + S-adenosyl-L-methionine = 5-methyluridine(341) in tmRNA + S-adenosyl-L-homocysteine + H(+). Dual-specificity methyltransferase that catalyzes the formation of 5-methyluridine at position 54 (m5U54) in all tRNAs, and that of position 341 (m5U341) in tmRNA (transfer-mRNA). This is tRNA/tmRNA (uracil-C(5))-methyltransferase from Pseudomonas putida (strain GB-1).